The chain runs to 154 residues: Myoglobin (154 aa).

The 147-residue stretch at Gly-2 to Lys-148 folds into the Globin domain. Ser-4 and Ser-32 each carry phosphoserine. Nitrite is bound at residue His-65. Position 65 (His-65) interacts with O2. At Thr-68 the chain carries Phosphothreonine. Position 94 (His-94) interacts with heme b. Ser-121 and Ser-133 each carry phosphoserine.

This sequence belongs to the globin family. Monomeric.

It localises to the cytoplasm. The protein resides in the sarcoplasm. The enzyme catalyses Fe(III)-heme b-[protein] + nitric oxide + H2O = Fe(II)-heme b-[protein] + nitrite + 2 H(+). The catalysed reaction is H2O2 + AH2 = A + 2 H2O. Functionally, monomeric heme protein which primary function is to store oxygen and facilitate its diffusion within muscle tissues. Reversibly binds oxygen through a pentacoordinated heme iron and enables its timely and efficient release as needed during periods of heightened demand. Depending on the oxidative conditions of tissues and cells, and in addition to its ability to bind oxygen, it also has a nitrite reductase activity whereby it regulates the production of bioactive nitric oxide. Under stress conditions, like hypoxia and anoxia, it also protects cells against reactive oxygen species thanks to its pseudoperoxidase activity. In Rattus norvegicus (Rat), this protein is Myoglobin.